Consider the following 120-residue polypeptide: Ribonuclease P protein component (120 aa).

It belongs to the RnpA family. As to quaternary structure, consists of a catalytic RNA component (M1 or rnpB) and a protein subunit.

It carries out the reaction Endonucleolytic cleavage of RNA, removing 5'-extranucleotides from tRNA precursor.. Functionally, RNaseP catalyzes the removal of the 5'-leader sequence from pre-tRNA to produce the mature 5'-terminus. It can also cleave other RNA substrates such as 4.5S RNA. The protein component plays an auxiliary but essential role in vivo by binding to the 5'-leader sequence and broadening the substrate specificity of the ribozyme. The sequence is that of Ribonuclease P protein component from Azoarcus sp. (strain BH72).